The following is a 674-amino-acid chain: DNA ligase (674 aa).

Residues aspartate 35–aspartate 39, serine 82–leucine 83, and glutamate 116 each bind NAD(+). Residue lysine 118 is the N6-AMP-lysine intermediate of the active site. 4 residues coordinate NAD(+): arginine 139, glutamate 174, lysine 282, and lysine 306. Zn(2+) is bound by residues cysteine 400, cysteine 403, cysteine 418, and cysteine 424. The 82-residue stretch at serine 593 to valine 674 folds into the BRCT domain.

The protein belongs to the NAD-dependent DNA ligase family. LigA subfamily. Mg(2+) serves as cofactor. Mn(2+) is required as a cofactor.

The catalysed reaction is NAD(+) + (deoxyribonucleotide)n-3'-hydroxyl + 5'-phospho-(deoxyribonucleotide)m = (deoxyribonucleotide)n+m + AMP + beta-nicotinamide D-nucleotide.. Its function is as follows. DNA ligase that catalyzes the formation of phosphodiester linkages between 5'-phosphoryl and 3'-hydroxyl groups in double-stranded DNA using NAD as a coenzyme and as the energy source for the reaction. It is essential for DNA replication and repair of damaged DNA. The sequence is that of DNA ligase from Ehrlichia ruminantium (strain Welgevonden).